Here is a 1066-residue protein sequence, read N- to C-terminus: Pumilio homolog 2 (1066 aa).

Positions 1-260 (MNHDFQALAL…ATVGLFDYNS (260 aa)) are interaction with SNAPIN. Ser-67, Ser-82, and Ser-102 each carry phosphoserine. The tract at residues 106–204 (KLDSRFRKGN…NPSEGLGPLP (99 aa)) is disordered. A compositionally biased stretch (basic and acidic residues) spans 119-133 (RDAETDGPEKGDQKG). Residues Ser-136, Ser-178, and Ser-182 each carry the phosphoserine modification. 2 positions are modified to phosphothreonine: Thr-184 and Thr-396. The segment at 494 to 553 (STNGLFRPIGTQPPQQQQQQPSTNLQSNSFYGSSSLTNSSQSSSLFSHGPGQPGSTSLGF) is disordered. Residues 505-514 (QPPQQQQQQP) are compositionally biased toward low complexity. Polar residues predominate over residues 515 to 525 (STNLQSNSFYG). Low complexity predominate over residues 526-540 (SSSLTNSSQSSSLFS). 2 positions are modified to phosphoserine: Ser-587 and Ser-592. A disordered region spans residues 620 to 650 (SPIGMPLPSQTPGHSLTPPPSLSSHGSSSSL). The segment covering 630–650 (TPGHSLTPPPSLSSHGSSSSL) has biased composition (low complexity). Arg-674 is modified (omega-N-methylarginine). Phosphoserine is present on residues Ser-684 and Ser-700. The region spanning 706–1048 (GRSRLLEDFR…HILAKLEKYY (343 aa)) is the PUM-HD domain. Pumilio repeat units lie at residues 726 to 761 (DLIG…MVFN), 762 to 797 (EILQ…ALAT), 798 to 835 (RIRG…EMVK), 836 to 871 (ELDG…FIID), 872 to 907 (AFKG…PILE), 908 to 943 (ELHQ…KIVS), 944 to 979 (EIRG…LLID), and 983 to 1022 (CQND…IIMH). Residues 741–745 (SRFIQ) are adenine-nucleotide binding in RNA target. The uracil-nucleotide binding in RNA target stretch occupies residues 777–781 (NYVIQ). The tract at residues 813-817 (CRVIQ) is adenine-nucleotide binding in RNA target. A non-specific-nucleotide binding in RNA target region spans residues 851-855 (NHVVQ). Residues 887–891 (CRVIQ) are adenine-nucleotide binding in RNA target. A uracil-nucleotide binding in RNA target region spans residues 923–927 (NYVIQ). Residues 959 to 963 (SNVVE) are guanine-nucleotide binding in RNA target. The interval 1002–1006 (NYVVQ) is uracil-nucleotide binding in RNA target.

Homodimer; homodimerizes in vitro. Interacts with DAZ1, DAZL and NANOS1 via its pumilio repeats. Interacts with NANOS3. Interacts with SNAPIN. Recruits the CCR4-POP2-NOT deadenylase leading to translational inhibition and mRNA degradation. Interacts with DDX20. In case of viral infection, interacts with DHX58. Interacts with TRIM71 (via NHL repeats) in an RNA-dependent manner. As to expression, expressed in male germ cells of adult testis (at protein level). Highly expressed in testis and ovary. Predominantly expressed in stem cells and germ cells. Expressed at lower level in brain, heart, kidney, liver, muscle, placenta, intestine and stomach Expressed in cerebellum, corpus callosum, caudate nucleus, hippocampus, medulla oblongata and putamen. Expressed in all fetal tissues tested.

The protein resides in the cytoplasm. The protein localises to the cytoplasmic granule. It localises to the perinuclear region. Functionally, sequence-specific RNA-binding protein that acts as a post-transcriptional repressor by binding the 3'-UTR of mRNA targets. Binds to an RNA consensus sequence, the Pumilio Response Element (PRE), 5'-UGUANAUA-3', that is related to the Nanos Response Element (NRE) (, PubMed:21397187). Mediates post-transcriptional repression of transcripts via different mechanisms: acts via direct recruitment of the CCR4-POP2-NOT deadenylase leading to translational inhibition and mRNA degradation. Also mediates deadenylation-independent repression by promoting accessibility of miRNAs. Acts as a post-transcriptional repressor of E2F3 mRNAs by binding to its 3'-UTR and facilitating miRNA regulation. Plays a role in cytoplasmic sensing of viral infection. Represses a program of genes necessary to maintain genomic stability such as key mitotic, DNA repair and DNA replication factors. Its ability to repress those target mRNAs is regulated by the lncRNA NORAD (non-coding RNA activated by DNA damage) which, due to its high abundance and multitude of PUMILIO binding sites, is able to sequester a significant fraction of PUM1 and PUM2 in the cytoplasm. May regulate DCUN1D3 mRNA levels. May support proliferation and self-renewal of stem cells. Binds specifically to miRNA MIR199A precursor, with PUM1, regulates miRNA MIR199A expression at a postranscriptional level. This chain is Pumilio homolog 2 (PUM2), found in Homo sapiens (Human).